The sequence spans 335 residues: Phosphate acyltransferase (335 aa).

The protein belongs to the PlsX family. Homodimer. Probably interacts with PlsY.

The protein localises to the cytoplasm. The enzyme catalyses a fatty acyl-[ACP] + phosphate = an acyl phosphate + holo-[ACP]. The protein operates within lipid metabolism; phospholipid metabolism. Its function is as follows. Catalyzes the reversible formation of acyl-phosphate (acyl-PO(4)) from acyl-[acyl-carrier-protein] (acyl-ACP). This enzyme utilizes acyl-ACP as fatty acyl donor, but not acyl-CoA. This is Phosphate acyltransferase from Desulforudis audaxviator (strain MP104C).